The primary structure comprises 662 residues: Glycogen debranching enzyme (662 aa).

The Nucleophile role is filled by Asp338. Glu373 serves as the catalytic Proton donor.

The protein belongs to the glycosyl hydrolase 13 family.

It catalyses the reaction Hydrolysis of (1-&gt;6)-alpha-D-glucosidic linkages to branches with degrees of polymerization of three or four glucose residues in limit dextrin.. Its pathway is glycan degradation; glycogen degradation. Its function is as follows. Removes maltotriose and maltotetraose chains that are attached by 1,6-alpha-linkage to the limit dextrin main chain, generating a debranched limit dextrin. The sequence is that of Glycogen debranching enzyme from Yersinia pestis.